The following is a 234-amino-acid chain: uncharacterized protein (234 aa).

The ABC transporter domain maps to 5–234; the sequence is MELVDVWKIY…ERRGVVYGDT (230 aa). Position 41 to 48 (41 to 48) interacts with ATP; the sequence is GPSGSGKS.

Belongs to the ABC transporter superfamily.

This is an uncharacterized protein from Thermotoga maritima (strain ATCC 43589 / DSM 3109 / JCM 10099 / NBRC 100826 / MSB8).